We begin with the raw amino-acid sequence, 105 residues long: Flagellar transcriptional regulator FlhD (105 aa).

It belongs to the FlhD family. As to quaternary structure, homodimer; disulfide-linked. Forms a heterohexamer composed of two FlhC and four FlhD subunits. Each FlhC binds a FlhD dimer, forming a heterotrimer, and a hexamer assembles by dimerization of two heterotrimers.

It is found in the cytoplasm. Functions in complex with FlhC as a master transcriptional regulator that regulates transcription of several flagellar and non-flagellar operons by binding to their promoter region. Activates expression of class 2 flagellar genes, including fliA, which is a flagellum-specific sigma factor that turns on the class 3 genes. Also regulates genes whose products function in a variety of physiological pathways. The chain is Flagellar transcriptional regulator FlhD from Nitrosomonas europaea (strain ATCC 19718 / CIP 103999 / KCTC 2705 / NBRC 14298).